We begin with the raw amino-acid sequence, 115 residues long: Large ribosomal subunit protein uL22 (115 aa).

Belongs to the universal ribosomal protein uL22 family. In terms of assembly, part of the 50S ribosomal subunit.

This protein binds specifically to 23S rRNA; its binding is stimulated by other ribosomal proteins, e.g. L4, L17, and L20. It is important during the early stages of 50S assembly. It makes multiple contacts with different domains of the 23S rRNA in the assembled 50S subunit and ribosome. Functionally, the globular domain of the protein is located near the polypeptide exit tunnel on the outside of the subunit, while an extended beta-hairpin is found that lines the wall of the exit tunnel in the center of the 70S ribosome. The chain is Large ribosomal subunit protein uL22 (rplV) from Wolbachia pipientis wMel.